The sequence spans 511 residues: Sporulation-specific chitinase 2 (511 aa).

The N-terminal stretch at 1 to 34 (MVGHSAQHRSKSSLVSHLLILLIFITIIIEMCLY) is a signal peptide. The region spanning 73–472 (FISGVYYSNW…NAFNEGLHFN (400 aa)) is the GH18 domain. Residue N147 is glycosylated (N-linked (GlcNAc...) asparagine). Residue E223 is the Proton donor of the active site. 3 N-linked (GlcNAc...) asparagine glycosylation sites follow: N228, N456, and N472.

The protein belongs to the glycosyl hydrolase 18 family. Chitinase class III subfamily.

The protein localises to the secreted. It carries out the reaction Random endo-hydrolysis of N-acetyl-beta-D-glucosaminide (1-&gt;4)-beta-linkages in chitin and chitodextrins.. The protein is Sporulation-specific chitinase 2 (CTS2) of Saccharomyces cerevisiae (strain ATCC 204508 / S288c) (Baker's yeast).